Reading from the N-terminus, the 193-residue chain is MSTSSGADSSPPVSGLDYDDTALTLALPGSSSSSSSTADPERKRAAHADHADAKPPSPKARAVGWPPVRAYRRNALREDSARAKLVKVAVDGAPYLRKVDLAAHAGYAPLLRALHGMFASCLAVRGGGGGDGEGTKLVDLVTGAEYVPTYEDKDGDWMLVGDVPWKMFVESCKRIRLMKSSEAVNLSPRRSSR.

Positions 1-12 are enriched in polar residues; the sequence is MSTSSGADSSPP. A disordered region spans residues 1 to 66; sequence MSTSSGADSS…SPKARAVGWP (66 aa). Residues 21-36 show a composition bias toward low complexity; sequence TALTLALPGSSSSSSS. The EAR-like (transcriptional repression) motif lies at 23–27; sequence LTLAL. Residues 39 to 53 show a composition bias toward basic and acidic residues; the sequence is DPERKRAAHADHADA. In terms of domain architecture, PB1 spans 83–191; it reads AKLVKVAVDG…EAVNLSPRRS (109 aa).

It belongs to the Aux/IAA family. As to quaternary structure, homodimers and heterodimers. As to expression, highly expressed in roots. Expressed in seedlings.

It localises to the nucleus. Aux/IAA proteins are short-lived transcriptional factors that function as repressors of early auxin response genes at low auxin concentrations. In Oryza sativa subsp. japonica (Rice), this protein is Auxin-responsive protein IAA23 (IAA23).